Consider the following 101-residue polypeptide: uncharacterized protein (101 aa).

2 consecutive transmembrane segments (helical) span residues 3–23 (IVYE…LFLF) and 39–59 (AFLS…LIFF).

The protein resides in the membrane. This is an uncharacterized protein from Saccharomyces cerevisiae (strain ATCC 204508 / S288c) (Baker's yeast).